The following is a 218-amino-acid chain: Probable nicotinate-nucleotide adenylyltransferase (218 aa).

Belongs to the NadD family.

The enzyme catalyses nicotinate beta-D-ribonucleotide + ATP + H(+) = deamido-NAD(+) + diphosphate. It functions in the pathway cofactor biosynthesis; NAD(+) biosynthesis; deamido-NAD(+) from nicotinate D-ribonucleotide: step 1/1. In terms of biological role, catalyzes the reversible adenylation of nicotinate mononucleotide (NaMN) to nicotinic acid adenine dinucleotide (NaAD). This is Probable nicotinate-nucleotide adenylyltransferase from Sodalis glossinidius (strain morsitans).